Reading from the N-terminus, the 535-residue chain is Dual specificity calcium/calmodulin-dependent 3',5'-cyclic nucleotide phosphodiesterase 1B (535 aa).

Positions 1-21 (MELSPRSPPEMLESDCPSPLE) are disordered. Phosphoserine is present on residues serine 7 and serine 14. 2 calmodulin-binding regions span residues 27 to 47 (SKKM…QLEN) and 117 to 140 (EKPK…MFRR). One can recognise a PDEase domain in the interval 145–502 (VGPTYSTAVH…QKWKERAASG (358 aa)). The Proton donor role is filled by histidine 222. Residues histidine 226, histidine 262, aspartate 263, and aspartate 369 each coordinate Zn(2+). Residue aspartate 263 participates in Mg(2+) binding. Disordered stretches follow at residues 445–474 (PLTD…GDPN) and 495–535 (WKER…GNLD). The segment covering 454-463 (KSQPSFQWRQ) has biased composition (polar residues). A phosphoserine mark is found at serine 465 and serine 513.

It belongs to the cyclic nucleotide phosphodiesterase family. PDE1 subfamily. Homodimer. Zn(2+) is required as a cofactor. Requires Mg(2+) as cofactor. In terms of tissue distribution, expressed in brain.

It is found in the cytoplasm. It localises to the cytosol. It catalyses the reaction a nucleoside 3',5'-cyclic phosphate + H2O = a nucleoside 5'-phosphate + H(+). The enzyme catalyses 3',5'-cyclic GMP + H2O = GMP + H(+). It carries out the reaction 3',5'-cyclic AMP + H2O = AMP + H(+). Type I PDE are activated by the binding of calmodulin in the presence of Ca(2+). Its function is as follows. Cyclic nucleotide phosphodiesterase with a dual specificity for the second messengers cAMP and cGMP, which are key regulators of many important physiological processes. Has a preference for cGMP as a substrate. This chain is Dual specificity calcium/calmodulin-dependent 3',5'-cyclic nucleotide phosphodiesterase 1B, found in Rattus norvegicus (Rat).